A 622-amino-acid chain; its full sequence is MSTDNKQSLPAITLAAIGVVYGDIGTSPLYTLRECLSGQFGFGVERDAVFGFLSLIFWLLIFVVSIKYLTFVMRADNAGEGGILTLMSLAGRNTSARTTSMLVIMGLIGGSFFYGEVVITPAISVMSAIEGLEIVAPQLDTWIVPLSIIVLTLLFMIQKHGTGMVGKLFAPIMLTWFLILAVLGLRSIIANPEVLHALNPVWAVRFFLEYKTVSFIALGAVVLSITGVEALYADMGHFGKFPIRLAWFTVVLPSLVLNYFGQGALLLKHPEAIKNPFFLLAPDWALIPLLILAALATVIASQAVISGVFSLTRQAVRLGYLSPMRIIHTSEMESGQIYIPFVNWLLYFAVVVVIVSFEHSSNLAAAYGIAVTGTMVLTSILSTTVARKNWHWNKYFVALILIAFLCVDIPLFSANLDKLLSGGWLPLSLGLIMFTIMTTWKSERFRLLRRMHEHGNSLEAMIASLEKSPPVRVPGTAVYMSRALSVIPFALLHNLKHNKVLHERVILLTLRTEDAPYVHNVRRVQIEQLSPTFWRVVASYGWRETPNVEEVFHRCGLEGLSCRMMETSFFMSHESLIVGKRPWYLRLRGKLYLLLQRNALRAPDQFEIPPNRVIELGTQVEI.

Transmembrane regions (helical) follow at residues 9–29, 49–69, 103–123, 137–157, 165–185, 213–233, 247–267, 276–296, 337–357, 363–383, 396–416, and 419–439; these read LPAI…TSPL, VFGF…IKYL, VIMG…TPAI, PQLD…LFMI, VGKL…VLGL, VSFI…ALYA, WFTV…ALLL, PFFL…AALA, IYIP…IVSF, LAAA…ILST, FVAL…SANL, and LLSG…IMTT.

Belongs to the HAK/KUP transporter (TC 2.A.72) family.

It localises to the cell inner membrane. It catalyses the reaction K(+)(in) + H(+)(in) = K(+)(out) + H(+)(out). Its function is as follows. Responsible for the low-affinity transport of potassium into the cell. Likely operates as a K(+):H(+) symporter. The polypeptide is Low affinity potassium transport system protein Kup (Salmonella paratyphi B (strain ATCC BAA-1250 / SPB7)).